The sequence spans 414 residues: Autophagy-related protein 18 (414 aa).

WD repeat units follow at residues 1-36 (MAMN…KSYE), 69-114 (KRQS…LLYT), 185-225 (AHRS…KLYQ), and 230-269 (SIPS…SSRE). The L/FRRG motif motif lies at 226 to 230 (FRRGS). The interval 261–314 (LSHQTSSREGSPSSALSRERAASQSSLGTSPDPDDPTDDMESSEIASRKHNGTL) is disordered. Residues 262–289 (SHQTSSREGSPSSALSRERAASQSSLGT) are compositionally biased toward polar residues. Over residues 292 to 302 (DPDDPTDDMES) the composition is skewed to acidic residues. WD repeat units lie at residues 309–355 (KHNG…AWIK) and 367–407 (GNAG…GGEG).

This sequence belongs to the WD repeat PROPPIN family. In terms of assembly, component of the PI(3,5)P2 regulatory complex.

The protein localises to the preautophagosomal structure membrane. Its subcellular location is the vacuole membrane. The protein resides in the endosome membrane. The PI(3,5)P2 regulatory complex regulates both the synthesis and turnover of phosphatidylinositol 3,5-bisphosphate (PtdIns(3,5)P2). Necessary for proper vacuole morphology. Plays an important role in osmotically-induced vacuole fragmentation. Required for cytoplasm to vacuole transport (Cvt) vesicle formation, pexophagy and starvation-induced autophagy. Involved in correct atg9 trafficking to the pre-autophagosomal structure. Might also be involved in premeiotic DNA replication. This chain is Autophagy-related protein 18 (atg18), found in Aspergillus terreus (strain NIH 2624 / FGSC A1156).